We begin with the raw amino-acid sequence, 371 residues long: DNA replication and repair protein RecF (371 aa).

30–37 (GQNGSGKT) serves as a coordination point for ATP.

The protein belongs to the RecF family.

The protein localises to the cytoplasm. Functionally, the RecF protein is involved in DNA metabolism; it is required for DNA replication and normal SOS inducibility. RecF binds preferentially to single-stranded, linear DNA. It also seems to bind ATP. This chain is DNA replication and repair protein RecF, found in Chlorobium phaeovibrioides (strain DSM 265 / 1930) (Prosthecochloris vibrioformis (strain DSM 265)).